Consider the following 378-residue polypeptide: MSKEPLILWLMIEFWWLYLTPVTSETVVTEVLGHRVTLPCLYSSWSHNSNSMCWGKDQCPYSGCKEALIRTDGMRVTSRKSAKYRLQGTIPRGDVSLTILNPSESDSGVYCCRIEVPGWFNDVKINVRLNLQRASTTTHRTATTTTRRTTTTSPTTTRQMTTTPAALPTTVVTTPDLTTGTPLQMTTIAVFTTANTCLSLTPSTLPEEATGLLTPEPSKEGPILTAESETVLPSDSWSSVESTSADTVLLTSKESKVWDLPSTSHVSMWKTSDSVSSPQPGASDTAVPEQNKTTKTGQMDGIPMSMKNEMPISQLLMIIAPSLGFVLFALFVAFLLRGKLMETYCSQKHTRLDYIGDSKNVLNDVQHGREDEDGLFTL.

An N-terminal signal peptide occupies residues M1–S24. The Ig-like V-type domain occupies E25–N126. Residues E25–Q314 are Extracellular-facing. Cystine bridges form between C40–C112, C53–C64, and C59–C111. Disordered regions lie at residues T136–M160 and W269–M304. Polar residues predominate over residues W269–G297. N-linked (GlcNAc...) asparagine glycosylation occurs at N291. A helical transmembrane segment spans residues L315–L335. Residues L336–L378 lie on the Cytoplasmic side of the membrane. S358 carries the post-translational modification Phosphoserine.

This sequence belongs to the immunoglobulin superfamily. TIM family. Interacts with MERTK; this interaction enhances TIMD4-mediated efferocytosis. Interacts with EPHA2.

The protein resides in the cell membrane. The protein localises to the secreted. It localises to the extracellular exosome. In terms of biological role, phosphatidylserine receptor that plays different role in immune response including phagocytosis of apoptotic cells and T-cell regulation. Controls T-cell activation in a bimodal fashion, decreasing the activation of naive T-cells by inducing cell cycle arrest, while increasing proliferation of activated T-cells by activating AKT1 and ERK1/2 phosphorylations and subsequent signaling pathways. Also plays a role in efferocytosis which is the process by which apoptotic cells are removed by phagocytic cells. Mechanistically, promotes the engulfment of apoptotic cells or exogenous particles by securing them to phagocytes through direct binding to phosphatidylserine present on apoptotic cells, while other engulfment receptors such as MERTK efficiently recognize apoptotic cells and mediate their ingestion. Additionally, promotes autophagy process by suppressing NLRP3 inflammasome activity via activation of LKB1/PRKAA1 pathway in a phosphatidylserine-dependent mechanism. (Microbial infection) Plays a positive role in exosome-mediated trafficking of HIV-1 virus and its entry into immune cells. This is T-cell immunoglobulin and mucin domain-containing protein 4 (TIMD4) from Homo sapiens (Human).